A 728-amino-acid polypeptide reads, in one-letter code: MRSLKLILASASVVSATCPYMSGEMPNSQNGPLDRRHDTLSDPTDQFLSKFYIDDEQSVLTTDVGGPIEDQHSLKAGNRGPTLLEDFIFRQKIQHFDHERVPERAVHARGAGAHGVFTSYNNWSNITAASFLNAAGKQTPVFVRFSTVAGSRGSVDSARDIHGFATRLYTDEGNFDIVGNNVPVFFIQDAIQFPDLIHAVKPQPDSEIPQAATAHDTAWDFFSQQPSSLHALFWAMSGHGIPRSMRHVDGWGVHTFRLVTDEGNSTLVKFRWKTLQGRAGLVWEEAQALGGKNPDFHRQDLWDAIESGRYPEWELGFQLVNEADQSKFDFDLLDPTKIIPEELVPFTPIGKMVLNRNPKNYFAETEQIMFQPGHVVRGIDFTDDPLLQGRLYSYLDTQLNRHGGPNFEQLPINRPRIPFHNNNRDGAGQMFIPLNTAAYTPNSMSNGFPQQANRTHNRGFFTAPGRMVNGPLVRELSPSFNDVWSQPRLFYNSLTVFEKQFLVNAMRFENSHVRSETVRKNVIIQLNRVDNDLARRVALAIGVEPPSPDPTFYHNKTTVPIGTFGTNLLRLDGLKIALLTRDDGSFTIAEQLRAAFNSANNKVDIVLVGSSLDPQRGVNMTYSGADGSIFDAVIVVGGLLTSASTQYPRGRPLRIITDAYAYGKPVGAVGDGSNEALRDVLMAAGGDASNGLDQPGVYISNDVSEAYVRSVLDGLTAYRFLNRFPLDR.

Active-site residues include His107 and Asn180. Tyr394 is a binding site for heme.

This sequence belongs to the catalase family. It depends on heme as a cofactor.

The protein localises to the secreted. The enzyme catalyses 2 H2O2 = O2 + 2 H2O. In terms of biological role, occurs in almost all aerobically respiring organisms and serves to protect cells from the toxic effects of hydrogen peroxide. This Ajellomyces capsulatus (Darling's disease fungus) protein is Catalase B (CATB).